Consider the following 306-residue polypeptide: ADP,ATP carrier protein ER-ANT1 (306 aa).

Solcar repeat units follow at residues 8–101 (ERFS…FKNL), 113–205 (KWFA…IKPI), and 213–299 (GNFL…LHQI). The next 5 helical transmembrane spans lie at 10–37 (FSAD…VKLL), 78–102 (QANV…KNLL), 111–131 (YLKW…TTSL), 181–202 (FGVS…YDTI), and 216–236 (LASF…AYPF). ADP is bound by residues arginine 83 and lysine 95. Arginine 240 contributes to the ADP binding site. The segment at 240-245 (RRRMML) is important for transport activity. The Nucleotide carrier signature motif motif lies at 240-245 (RRRMML). The helical transmembrane segment at 276-296 (VTANMLLGVAGAGVLAGYDQL) threads the bilayer.

The protein belongs to the mitochondrial carrier (TC 2.A.29) family.

It localises to the endoplasmic reticulum membrane. It catalyses the reaction ADP(in) + ATP(out) = ADP(out) + ATP(in). Its function is as follows. ADP:ATP antiporter that catalyzes the exchange of ADP and ATP across the endoplasmic reticulum membrane. The sequence is that of ADP,ATP carrier protein ER-ANT1 (ER-ANT1) from Arabidopsis thaliana (Mouse-ear cress).